We begin with the raw amino-acid sequence, 332 residues long: Autoinducer 2 import system permease protein LsrD (332 aa).

The next 10 helical transmembrane spans lie at 7–27 (YSWE…FGLI), 45–65 (ICIG…GMDI), 70–90 (TIGL…PLPL), 91–111 (AIII…GLII), 118–138 (LVIT…LSGM), 162–182 (FLGI…FWLL), 216–236 (VYAM…SYFG), 240–260 (SDLG…GGAN), 261–281 (IYGG…VGFL), and 288–308 (AGVP…VVVV).

This sequence belongs to the binding-protein-dependent transport system permease family. AraH/RbsC subfamily. In terms of assembly, the complex is composed of two ATP-binding proteins (LsrA), two transmembrane proteins (LsrC and LsrD) and a solute-binding protein (LsrB).

It is found in the cell inner membrane. Part of the ABC transporter complex LsrABCD involved in autoinducer 2 (AI-2) import. Probably responsible for the translocation of the substrate across the membrane. This Salmonella paratyphi B (strain ATCC BAA-1250 / SPB7) protein is Autoinducer 2 import system permease protein LsrD (lsrD).